We begin with the raw amino-acid sequence, 613 residues long: Epsin-2 (613 aa).

An ENTH domain is found at N11–R143. 3 disordered regions span residues R140–D208, T323–M351, and R356–Q375. Over residues R148–S167 the composition is skewed to basic residues. At T165 the chain carries Phosphothreonine. S167 bears the Phosphoserine mark. 2 consecutive UIM domains span residues S175–D194 and D206–K225. A compositionally biased stretch (basic and acidic residues) spans D179–R188. Residues T323–Q339 are compositionally biased toward low complexity. Residues P340–S350 are compositionally biased toward polar residues. K426 participates in a covalent cross-link: Glycyl lysine isopeptide (Lys-Gly) (interchain with G-Cter in ubiquitin). T430 is subject to Phosphothreonine. The residue at position 434 (S434) is a Phosphoserine. Residues T450, T468, and T470 each carry the phosphothreonine modification. A compositionally biased stretch (polar residues) spans G471 to G512. The tract at residues G471 to L613 is disordered. Over residues S526–Q600 the composition is skewed to low complexity.

The protein belongs to the epsin family. Phosphorylated by PRK1.

The protein resides in the cytoplasm. It is found in the membrane. Functionally, binds to membranes enriched in phosphatidylinositol 3,5-bisphosphate (PtdIns(3,5)P2) and phosphatidylinositol 4,5-bisphosphate (PtdIns(4,5)P2). Required for endocytosis and localization of actin. In Saccharomyces cerevisiae (strain ATCC 204508 / S288c) (Baker's yeast), this protein is Epsin-2 (ENT2).